Here is a 101-residue protein sequence, read N- to C-terminus: Phosphoribosyl-AMP cyclohydrolase (101 aa).

Asp-71 contacts Mg(2+). Cys-72 provides a ligand contact to Zn(2+). Mg(2+)-binding residues include Asp-73 and Asp-75. Residues Cys-88 and Cys-95 each coordinate Zn(2+).

This sequence belongs to the PRA-CH family. Homodimer. It depends on Mg(2+) as a cofactor. The cofactor is Zn(2+).

The protein localises to the cytoplasm. It carries out the reaction 1-(5-phospho-beta-D-ribosyl)-5'-AMP + H2O = 1-(5-phospho-beta-D-ribosyl)-5-[(5-phospho-beta-D-ribosylamino)methylideneamino]imidazole-4-carboxamide. It functions in the pathway amino-acid biosynthesis; L-histidine biosynthesis; L-histidine from 5-phospho-alpha-D-ribose 1-diphosphate: step 3/9. Its function is as follows. Catalyzes the hydrolysis of the adenine ring of phosphoribosyl-AMP. The protein is Phosphoribosyl-AMP cyclohydrolase of Bacillus cereus (strain ATCC 10987 / NRS 248).